Consider the following 421-residue polypeptide: ATP-dependent RNA helicase RhlB (421 aa).

A Q motif motif is present at residues 9 to 37 (QKFSDFALHPVVVQALEKKGFYNCTPIQA). The Helicase ATP-binding domain maps to 40 to 219 (LPLTLAGRDV…FEQMNNAEYV (180 aa)). 53–60 (AQTGTGKT) contacts ATP. The DEAD box motif lies at 165 to 168 (DEAD). A Helicase C-terminal domain is found at 245–390 (RLLQTLIEEE…VSKYNPDALL (146 aa)). The tract at residues 390 to 421 (LSELPPPKRLSRPRTGNGPRRSGAPRNRRRTG) is disordered. Low complexity predominate over residues 405–414 (GNGPRRSGAP).

This sequence belongs to the DEAD box helicase family. RhlB subfamily. Component of the RNA degradosome, which is a multiprotein complex involved in RNA processing and mRNA degradation.

Its subcellular location is the cytoplasm. It catalyses the reaction ATP + H2O = ADP + phosphate + H(+). Its function is as follows. DEAD-box RNA helicase involved in RNA degradation. Has RNA-dependent ATPase activity and unwinds double-stranded RNA. This is ATP-dependent RNA helicase RhlB from Cronobacter sakazakii (strain ATCC BAA-894) (Enterobacter sakazakii).